The sequence spans 708 residues: Probable GTP diphosphokinase RSH3, chloroplastic (708 aa).

Disordered regions lie at residues 1 to 50 (MSLP…AAGG) and 109 to 134 (HSPV…SWLA). Residues 1–58 (MSLPAISLYTSPPPGAVYSSEFDPSSRGSSPPCSTAPPSTSHRPPAAAGGLSCLFSSP) constitute a chloroplast transit peptide. Composition is skewed to low complexity over residues 29-41 (SSPP…PSTS) and 118-131 (PSSS…PPAS). Positions 233 to 337 (YLQHCVETAV…IKLADRVHNM (105 aa)) constitute an HD domain.

The protein belongs to the RelA/SpoT family.

It is found in the plastid. It localises to the chloroplast. The catalysed reaction is GTP + ATP = guanosine 3'-diphosphate 5'-triphosphate + AMP. Functionally, probable ppGpp (guanosine 3'-diphosphate 5'-diphosphate) synthetase that may be involved in a rapid plant ppGpp-mediated response to pathogens and other stresses. This is Probable GTP diphosphokinase RSH3, chloroplastic (RSH3) from Oryza sativa subsp. japonica (Rice).